Reading from the N-terminus, the 196-residue chain is Large ribosomal subunit protein uL5 (196 aa).

This sequence belongs to the universal ribosomal protein uL5 family. As to quaternary structure, part of the 50S ribosomal subunit; part of the 5S rRNA/L5/L18/L25 subcomplex. Contacts the 5S rRNA and the P site tRNA. Forms a bridge to the 30S subunit in the 70S ribosome.

Functionally, this is one of the proteins that bind and probably mediate the attachment of the 5S RNA into the large ribosomal subunit, where it forms part of the central protuberance. In the 70S ribosome it contacts protein S13 of the 30S subunit (bridge B1b), connecting the 2 subunits; this bridge is implicated in subunit movement. Contacts the P site tRNA; the 5S rRNA and some of its associated proteins might help stabilize positioning of ribosome-bound tRNAs. This Prosthecochloris aestuarii (strain DSM 271 / SK 413) protein is Large ribosomal subunit protein uL5.